We begin with the raw amino-acid sequence, 397 residues long: Elongation factor Tu (397 aa).

The region spanning Lys10–Val207 is the tr-type G domain. The interval Gly19–Thr26 is G1. Residue Gly19 to Thr26 coordinates GTP. Thr26 contacts Mg(2+). The G2 stretch occupies residues Gly63–Asn67. Residues Asp84–Gly87 are G3. GTP-binding positions include Asp84 to His88 and Asn139 to Asp142. The interval Asn139–Asp142 is G4. Positions Ser177–Leu179 are G5.

This sequence belongs to the TRAFAC class translation factor GTPase superfamily. Classic translation factor GTPase family. EF-Tu/EF-1A subfamily. As to quaternary structure, monomer.

It is found in the cytoplasm. The enzyme catalyses GTP + H2O = GDP + phosphate + H(+). GTP hydrolase that promotes the GTP-dependent binding of aminoacyl-tRNA to the A-site of ribosomes during protein biosynthesis. The protein is Elongation factor Tu of Leifsonia xyli subsp. xyli (strain CTCB07).